We begin with the raw amino-acid sequence, 302 residues long: Sulfate adenylyltransferase subunit 2 (302 aa).

This sequence belongs to the PAPS reductase family. CysD subfamily. Heterodimer composed of CysD, the smaller subunit, and CysN.

It carries out the reaction sulfate + ATP + H(+) = adenosine 5'-phosphosulfate + diphosphate. It participates in sulfur metabolism; hydrogen sulfide biosynthesis; sulfite from sulfate: step 1/3. With CysN forms the ATP sulfurylase (ATPS) that catalyzes the adenylation of sulfate producing adenosine 5'-phosphosulfate (APS) and diphosphate, the first enzymatic step in sulfur assimilation pathway. APS synthesis involves the formation of a high-energy phosphoric-sulfuric acid anhydride bond driven by GTP hydrolysis by CysN coupled to ATP hydrolysis by CysD. The protein is Sulfate adenylyltransferase subunit 2 of Aeromonas hydrophila subsp. hydrophila (strain ATCC 7966 / DSM 30187 / BCRC 13018 / CCUG 14551 / JCM 1027 / KCTC 2358 / NCIMB 9240 / NCTC 8049).